The primary structure comprises 165 residues: Protein SprT (165 aa).

The SprT-like domain maps to 10 to 158 (EACYRQAEHF…CRRCKATLVF (149 aa)). His-69 provides a ligand contact to Zn(2+). The active site involves Glu-70. His-73 lines the Zn(2+) pocket.

Belongs to the SprT family. Zn(2+) serves as cofactor.

It localises to the cytoplasm. The protein is Protein SprT of Pseudomonas aeruginosa (strain UCBPP-PA14).